Consider the following 909-residue polypeptide: GTPase activating protein homolog 4 (909 aa).

One can recognise an F-BAR domain in the interval 1–257 (MASLIGSAKL…PTPDFQFESC (257 aa)). A Rho-GAP domain is found at 322–513 (IPIEEIMFKQ…LIIEGYLKLS (192 aa)). The tract at residues 529–909 (IPSFSNNNNN…QRVPPPPSQS (381 aa)) is disordered. Composition is skewed to low complexity over residues 533-562 (SNNN…ITTN) and 571-602 (SSTT…TPQQ). Residues 609 to 625 (SYQPPQPPPTMAPPPLF) show a composition bias toward pro residues. Positions 651–674 (QYTQSSSNLPPIQLGVTNSPSKPQ) are enriched in polar residues. Residues 672–809 (KPQLSDKQKE…QQLQQQSNGS (138 aa)) are a coiled coil. Over residues 675-716 (LSDKQKEKEKEKEKEKEKEKEREKEKEKEKEKEKEKEKEKEK) the composition is skewed to basic and acidic residues. The span at 723 to 741 (SSSTSPNSSSLSISNFLSS) shows a compositional bias: low complexity. Residues 742–765 (NKDKDKEKDKEKEKEKEKEKDKEI) are compositionally biased toward basic and acidic residues. The segment covering 767-785 (ATNSTPEKPVSNRMSLIFS) has biased composition (polar residues). Composition is skewed to low complexity over residues 786–828 (QQLQ…MSPS) and 843–892 (SGTS…ELKS).

It is found in the cytoplasm. Its subcellular location is the contractile vacuole. Functionally, rho GTPase-activating protein involved in the signal transduction pathway. The protein is GTPase activating protein homolog 4 (mgp4) of Dictyostelium discoideum (Social amoeba).